Reading from the N-terminus, the 105-residue chain is MADWDGKYISPYAEHGKKSEQVKKITVSIPIKVLEILTNERTRRQLRNLRHATNSELLCEAFLHAFTGQPLPTDEDLLKERHDEIPESAKQIMRELGINPDDWEY.

Belongs to the MetJ family. In terms of assembly, homodimer.

It is found in the cytoplasm. Its function is as follows. This regulatory protein, when combined with SAM (S-adenosylmethionine) represses the expression of the methionine regulon and of enzymes involved in SAM synthesis. This Histophilus somni (strain 129Pt) (Haemophilus somnus) protein is Met repressor.